Here is a 1067-residue protein sequence, read N- to C-terminus: MEGGGMTTIPGFNQIQFEGFCRFIDQGLTEELSKFPKIEDIDQEIEFQLFVETYQLVEPLIKERDAVYDSLTYSSELYVSARLIWKTSRDMQEQTIFIGSIPLMNSQGTSIVNGIYRIVINQILQSPGIYYRSELDHNGISVYTGTIISDWGGRSELEIDRKARIWARVSRKQKISILVLSSAMGSNLREILENVCYPEIFLSFLSDKEKKKIGSKENAILEFYQQFACVDGDPIFSESLWKELQKKFFQQRCELGRIGRRNMNRRLNLDIPQNNTFLLPRDLLAAADHLIGLKFGMGTLDDMNHLQNKRIRSVADLLQDQFGLALVRLENAVRGTICGAIRHKLIPTPQNLVTSTPLTTTYESFFGLHPLSQVLDRTNPLTQIVHGRKFSSLGPGGLTGRTASFRIRDIHPSHYGRICPIDTSEGINVGLIGSLAIHARIGHWGSLESPFYEISERSTGVRMLYLSPGRDEYYMVAAGNSLALNQDIQEDQVVPARYRQEFLTIAWEQVHLRSIFPFQYFSIGASLIPFIEHNDANRALMSSNMQRQAVPLSRSEKCIVGTGVERQAALDSGALVIAEREGRVVYTDTDKILFSGDGETLSIPLVMYKRSNKNTCMHQKPQVQRGKCIKKGQILADGAATVEGELALGKNVLVAYMPWEGYNSEDAVLISERLVYEDIYTSFHIKKYEIQTHVTSQGPEKVTNEIPHLEAHFIRNLDKNGIVKQGSWVETGDVLVGKLTPQVVKESSYAPEDRLLRAILGIQVSTSKETCLKVPIGGRGRVIDVRWIQKKGGSSYNPEMIRVYILQKREIKVGDKVAGRHGNKGIISKILPRQDMPYLQDGRSVDLVFNPLGVPSRMNLGQIFECSLGLAGSLLDRHYRIAPFDERYEQEASRKVVFSELYEASKQTANPWAFEPEYPGKSRIFDGRTGNPFEQPVLIGKPYILKLIHQVDDKIHGRSSGHYALVTQQPLRGRAKQGGQRVGEMEVWALEGFGVAHILQEMLTYKSDHIRARQEVLGTTIVGGTIPNPKDAPESFRLLVRELRSLALELNHFLVSEKNFQIHRKEA.

This sequence belongs to the RNA polymerase beta chain family. As to quaternary structure, in plastids the minimal PEP RNA polymerase catalytic core is composed of four subunits: alpha, beta, beta', and beta''. When a (nuclear-encoded) sigma factor is associated with the core the holoenzyme is formed, which can initiate transcription.

It localises to the plastid. Its subcellular location is the chloroplast. It carries out the reaction RNA(n) + a ribonucleoside 5'-triphosphate = RNA(n+1) + diphosphate. Its function is as follows. DNA-dependent RNA polymerase catalyzes the transcription of DNA into RNA using the four ribonucleoside triphosphates as substrates. The chain is DNA-directed RNA polymerase subunit beta from Ipomoea purpurea (Common morning glory).